A 125-amino-acid chain; its full sequence is RxLR effector protein Avh6 (125 aa).

The N-terminal stretch at 1-25 (MRLSSTTFVVLAAVLLASGTAVSKA) is a signal peptide. Positions 48–70 (RFLRSHHTEDGEAKLSNYDNEER) match the RxLR-dEER motif.

Belongs to the RxLR effector family.

The protein resides in the secreted. Its subcellular location is the host cell. Its function is as follows. Effector that suppresses plant defense responses during the early stages of pathogen infection. Suppresses cell death induced by effectors and PAMPs in plant hosts. Triggers a hypersensitive response (HR) in the presence of Rps1d. Suppresses BAX-induced cell death and enhan,ced P.capsici infection in Nicotiana benthamiana. Also suppresses effector-triggered immunity induction by associating with Avr1b and Rps1b, suggesting a role in suppressing plant immunity. This Phytophthora sojae (strain P6497) (Soybean stem and root rot agent) protein is RxLR effector protein Avh6.